The chain runs to 25 residues: Growth-blocking peptide (25 aa).

Cys7 and Cys19 are oxidised to a cystine. Glutamine amide is present on Gln25.

This sequence belongs to the GBP/PSP1/paralytic peptide family. Hemolymph.

Its function is as follows. Biogenic peptide that prevents, in lepidopteran, the onset of metamorphosis from larva to pupa. This growth-blocking peptide has repressive activity against juvenile hormone esterase. The sequence is that of Growth-blocking peptide from Cotesia kariyai (Parasitic wasp).